The chain runs to 347 residues: Ion-translocating oxidoreductase complex subunit D (347 aa).

The next 4 membrane-spanning stretches (helical) occupy residues 15 to 35 (IMFL…YFFG), 36 to 56 (IGTL…EIII), 84 to 104 (IPPL…IVVA), and 114 to 134 (NIFN…PVYM). Thr182 carries the post-translational modification FMN phosphoryl threonine. 5 helical membrane passes run 217–237 (CINI…IICW), 239–259 (IPIS…FYSK), 261–281 (LFMS…AFFI), 289–309 (ACNN…VWII), and 315–335 (YPDA…LVDY).

The protein belongs to the NqrB/RnfD family. In terms of assembly, the complex is composed of six subunits: RnfA, RnfB, RnfC, RnfD, RnfE and RnfG. FMN serves as cofactor.

Its subcellular location is the cell inner membrane. Functionally, part of a membrane-bound complex that couples electron transfer with translocation of ions across the membrane. The polypeptide is Ion-translocating oxidoreductase complex subunit D (Buchnera aphidicola subsp. Acyrthosiphon pisum (strain 5A)).